A 770-amino-acid polypeptide reads, in one-letter code: NAD-dependent malic enzyme (770 aa).

Positions 1-440 (MNTGDKAKSQ…KLNRFVFRSG (440 aa)) are malic enzyme. Lys107 acts as the Proton acceptor in catalysis. Positions 149 and 150 each coordinate a divalent metal cation. Residues Asp175 and Asn300 each coordinate NAD(+). The tract at residues 441–770 (FIMKPVFAAA…LAVVESSHPV (330 aa)) is phosphate acetyltransferase.

The protein in the N-terminal section; belongs to the malic enzymes family. In the C-terminal section; belongs to the phosphate acetyltransferase and butyryltransferase family. In terms of assembly, homooctamer. The cofactor is Mg(2+). Requires Mn(2+) as cofactor.

It carries out the reaction (S)-malate + NAD(+) = pyruvate + CO2 + NADH. Subject to substrate inhibition and shows allosteric regulation by acetyl-CoA. Its function is as follows. Required for symbiotic nitrogen fixation. Plays a key role in the conversion of malate to acetyl-CoA for efficient tricarboxylic acid cycle function in nitrogen-fixating bacteria. The polypeptide is NAD-dependent malic enzyme (dme) (Rhizobium meliloti (strain 1021) (Ensifer meliloti)).